A 298-amino-acid chain; its full sequence is Palmitoyl-protein thioesterase 1 (298 aa).

The N-terminal stretch at 1–16 (MRYFPLLLCLLAITTA) is a signal peptide. The N-linked (GlcNAc...) asparagine glycan is linked to Asn20. Disulfide bonds link Cys37–Cys38, Cys88–Cys120, and Cys144–Cys151. Ser107 functions as the Nucleophile in the catalytic mechanism. Asp224 is an active-site residue. N-linked (GlcNAc...) asparagine glycosylation is present at Asn250. His280 is a catalytic residue.

Belongs to the palmitoyl-protein thioesterase family.

The catalysed reaction is S-hexadecanoyl-L-cysteinyl-[protein] + H2O = L-cysteinyl-[protein] + hexadecanoate + H(+). Its function is as follows. Removes thioester-linked fatty acyl groups such as palmitate (hexadecanoate) from modified cysteine residues in proteins or peptides. In Caenorhabditis elegans, this protein is Palmitoyl-protein thioesterase 1 (ppt-1).